The following is a 388-amino-acid chain: Succinate--CoA ligase [ADP-forming] subunit beta (388 aa).

The ATP-grasp domain maps to 9–244 (KEILRKFGVA…LDEEDPAEIE (236 aa)). ATP contacts are provided by residues lysine 46, 53–55 (GRG), glutamate 99, alanine 102, and glutamate 107. Positions 199 and 213 each coordinate Mg(2+). Substrate-binding positions include asparagine 264 and 321–323 (GIM).

It belongs to the succinate/malate CoA ligase beta subunit family. In terms of assembly, heterotetramer of two alpha and two beta subunits. It depends on Mg(2+) as a cofactor.

The enzyme catalyses succinate + ATP + CoA = succinyl-CoA + ADP + phosphate. It carries out the reaction GTP + succinate + CoA = succinyl-CoA + GDP + phosphate. Its pathway is carbohydrate metabolism; tricarboxylic acid cycle; succinate from succinyl-CoA (ligase route): step 1/1. Succinyl-CoA synthetase functions in the citric acid cycle (TCA), coupling the hydrolysis of succinyl-CoA to the synthesis of either ATP or GTP and thus represents the only step of substrate-level phosphorylation in the TCA. The beta subunit provides nucleotide specificity of the enzyme and binds the substrate succinate, while the binding sites for coenzyme A and phosphate are found in the alpha subunit. The sequence is that of Succinate--CoA ligase [ADP-forming] subunit beta from Burkholderia lata (strain ATCC 17760 / DSM 23089 / LMG 22485 / NCIMB 9086 / R18194 / 383).